A 527-amino-acid polypeptide reads, in one-letter code: G patch domain-containing protein 2 (527 aa).

Residues 35 to 135 are disordered; sequence LEESSEQARG…RPSSNLSSSV (101 aa). Residues 62 to 76 show a composition bias toward basic residues; it reads RQARKRRGRKRRSYN. The span at 97–116 shows a compositional bias: basic and acidic residues; sequence EPSKDYREKHSNNKKDRSDS. A phosphoserine mark is found at Ser114, Ser116, and Ser145. 3 disordered regions span residues 175-281, 350-375, and 480-527; these read SSKR…GDDE, TPSK…GSNK, and TPGS…GNPA. Basic and acidic residues predominate over residues 186-196; that stretch reads GCRDQDMDNDR. The span at 206–215 shows a compositional bias: basic residues; it reads KKVKKRKLKG. The span at 231–257 shows a compositional bias: basic and acidic residues; sequence SEERSQPNKDRMEYEEQKASDELRSES. One can recognise a G-patch domain in the interval 466–512; it reads ESNIGNRMLQSMGWTPGSGLGRDGRGIAEPVQAVQRPKGLGLGFPLP. A compositionally biased stretch (low complexity) spans 510-527; it reads PLPKSSPTSPAPTSGNPA.

In terms of assembly, interacts with DHX15.

It localises to the nucleus speckle. The protein resides in the nucleus. Its subcellular location is the nucleolus. Functionally, enhances the ATPase activity of DHX15 in vitro. The polypeptide is G patch domain-containing protein 2 (Gpatch2) (Mus musculus (Mouse)).